We begin with the raw amino-acid sequence, 369 residues long: Cyanuric acid amidohydrolase (369 aa).

Positions 1–100 are RU A; sequence MPRRAEILRL…HWLVIAAREA (100 aa). Substrate-binding positions include R53 and 81–82; that span reads SG. The interval 106 to 242 is RU B; that stretch reads ALAVGQARTP…HEVVVMGMSP (137 aa). The active site involves K155. Substrate-binding positions include R187 and 225-226; that span reads SA. The Nucleophile role is filled by S225. The interval 248–369 is RU C; that stretch reads LVIDHAVMAD…ARRSGAAGPA (122 aa). Mg(2+) is bound at residue E296. Substrate contacts are provided by residues R323 and 342-343; that span reads SG. 5 residues coordinate Mg(2+): A345, Q348, G349, P350, and G353.

Belongs to the cyclic amide hydrolase (CyAH) family. In terms of assembly, homotetramer.

The enzyme catalyses cyanurate + H2O = 1-carboxybiuret + H(+). It participates in xenobiotic degradation; atrazine degradation; biuret from cyanurate: step 1/1. Inhibited by barbituric acid. Responsible for the hydrolysis of cyanuric acid, an intermediate formed during catabolism of s-triazine based compounds in herbicides such as atrazine and polymers such as melamine. Catalyzes the hydrolytic opening of the s-triazine ring of cyanuric acid (2,4,6-trihydroxy-s-triazine) to yield carbon dioxide and carboxybiuret, which spontaneously decarboxylates to biuret. The polypeptide is Cyanuric acid amidohydrolase (Methylobacterium sp. (strain 4-46)).